The chain runs to 158 residues: Transcription factor bHLH146 (158 aa).

Residues 77-90 (SSSSNPTTTTSSSS) show a composition bias toward low complexity. The interval 77–110 (SSSSNPTTTTSSSSDGIRILERPDKEGGNEEGGI) is disordered. The segment covering 94–110 (RILERPDKEGGNEEGGI) has biased composition (basic and acidic residues). The bHLH; atypical domain occupies 94-143 (RILERPDKEGGNEEGGIEERLRELKKLLPGGEEMNVEEMLSEIGNYIKCL).

This sequence belongs to the bHLH protein family.

It is found in the nucleus. The chain is Transcription factor bHLH146 (BHLH146) from Arabidopsis thaliana (Mouse-ear cress).